The primary structure comprises 302 residues: Glutamate/aspartate import solute-binding protein (302 aa).

The first 22 residues, 1-22 (MQLRKPATAILALALSAGLAQA), serve as a signal peptide directing secretion.

It belongs to the bacterial solute-binding protein 3 family. The complex is composed of two ATP-binding proteins (GltL), two transmembrane proteins (GltJ and GltK) and a solute-binding protein (GltI).

The protein resides in the periplasm. In terms of biological role, part of the ABC transporter complex GltIJKL involved in glutamate and aspartate uptake. Binds to both glutamate and aspartate. This Escherichia coli (strain K12) protein is Glutamate/aspartate import solute-binding protein (gltI).